The following is a 113-amino-acid chain: Hydrogenase maturation factor HypA (113 aa).

H2 lines the Ni(2+) pocket. C73, C76, C89, and C92 together coordinate Zn(2+).

The protein belongs to the HypA/HybF family.

Involved in the maturation of [NiFe] hydrogenases. Required for nickel insertion into the metal center of the hydrogenase. The protein is Hydrogenase maturation factor HypA of Rhodopseudomonas palustris (strain TIE-1).